The sequence spans 261 residues: Thiamine thiazole synthase (261 aa).

NAD(+)-binding positions include serine 40, 59 to 60 (ER), glycine 67, valine 133, and 159 to 161 (HVD). Positions 161 and 176 each coordinate Fe cation. NAD(+) is bound by residues serine 179 and methionine 226. Glycine is bound at residue arginine 236.

This sequence belongs to the THI4 family. Homooctamer; tetramer of dimers. Fe(2+) is required as a cofactor.

The catalysed reaction is hydrogen sulfide + glycine + NAD(+) = ADP-5-ethyl-4-methylthiazole-2-carboxylate + nicotinamide + 3 H2O + H(+). It functions in the pathway cofactor biosynthesis; thiamine diphosphate biosynthesis. Its function is as follows. Involved in the biosynthesis of the thiazole moiety of thiamine. Catalyzes the conversion of NAD and glycine to adenosine diphosphate 5-(2-hydroxyethyl)-4-methylthiazole-2-carboxylate (ADT), an adenylated thiazole intermediate, using free sulfide as a source of sulfur. This Methanococcus vannielii (strain ATCC 35089 / DSM 1224 / JCM 13029 / OCM 148 / SB) protein is Thiamine thiazole synthase.